A 297-amino-acid polypeptide reads, in one-letter code: Probable terminal-alkyne amino-acid exporter (297 aa).

Helical transmembrane passes span 6–26, 32–52, 65–85, 95–115, 123–143, 150–170, 178–198, 212–232, and 249–269; these read AVWALVLTVVTWASAFPAIRV, GVAGLSLSRLTVASVALAIAA, LPMIALCGATGMSAYQVLLNW, ASLLIAIAPVFSVLLAAVFLG, IAGSAVAISGAAVIAVAGGHA, WVVLAAAVVQGVYHFATKPLL, VACYAMWAGTVFLLPLLPAMV, TVYLGLLPSAIGFVSWGYAVA, and VALVVAFVWLGEVPPPLALVG. 2 consecutive EamA domains span residues 6 to 137 and 150 to 281; these read AVWA…AVIA and WVVL…MLIN.

The protein belongs to the EamA transporter family.

It is found in the cell membrane. Probably involved in the export of terminal alkyne-containing amino acids, namely L-propargylglycine (Pra) and L-beta-ethynylserine, that are antibiotics synthesized by enzymes encoded in the same gene cluster. In Streptantibioticus cattleyicolor (strain ATCC 35852 / DSM 46488 / JCM 4925 / NBRC 14057 / NRRL 8057) (Streptomyces cattleya), this protein is Probable terminal-alkyne amino-acid exporter.